We begin with the raw amino-acid sequence, 293 residues long: Ribosomal protein L11 methyltransferase (293 aa).

S-adenosyl-L-methionine-binding residues include Thr145, Gly166, Asp188, and Asn230.

Belongs to the methyltransferase superfamily. PrmA family.

The protein resides in the cytoplasm. The enzyme catalyses L-lysyl-[protein] + 3 S-adenosyl-L-methionine = N(6),N(6),N(6)-trimethyl-L-lysyl-[protein] + 3 S-adenosyl-L-homocysteine + 3 H(+). Methylates ribosomal protein L11. The protein is Ribosomal protein L11 methyltransferase of Escherichia coli O8 (strain IAI1).